We begin with the raw amino-acid sequence, 540 residues long: Chaperonin GroEL (540 aa).

ATP is bound by residues 29 to 32 (TLGP), 86 to 90 (DGTTT), glycine 413, 476 to 478 (NAA), and aspartate 492.

Belongs to the chaperonin (HSP60) family. Forms a cylinder of 14 subunits composed of two heptameric rings stacked back-to-back. Interacts with the co-chaperonin GroES.

The protein resides in the cytoplasm. It carries out the reaction ATP + H2O + a folded polypeptide = ADP + phosphate + an unfolded polypeptide.. In terms of biological role, together with its co-chaperonin GroES, plays an essential role in assisting protein folding. The GroEL-GroES system forms a nano-cage that allows encapsulation of the non-native substrate proteins and provides a physical environment optimized to promote and accelerate protein folding. In Streptococcus gordonii (strain Challis / ATCC 35105 / BCRC 15272 / CH1 / DL1 / V288), this protein is Chaperonin GroEL.